The chain runs to 279 residues: Large ribosomal subunit protein mL46 (279 aa).

Residue lysine 230 is modified to N6-acetyllysine.

Belongs to the mitochondrion-specific ribosomal protein mL46 family. Component of the mitochondrial ribosome large subunit (39S) which comprises a 16S rRNA and about 50 distinct proteins.

It localises to the mitochondrion. The polypeptide is Large ribosomal subunit protein mL46 (MRPL46) (Pongo abelii (Sumatran orangutan)).